Here is a 207-residue protein sequence, read N- to C-terminus: MLRGMKVVLATGNPGKVRELKEGLAPLGWTLLTLADFALRMPKEEGATFLENALLKAAYVAKATGLPALADDSGLEVYALGGEPGVYSARYGGRATDRERNVYLLERMRHLKGEERKARFVAVLVLAYPDGHAEAYEGSVEGVILEAPRGEGGFGYDPLFYVPEAGKTFAEMGLEEKARYSHRGKALRALLEAYKDGPPPREVSKLE.

11 to 16 lines the substrate pocket; sequence TGNPGK. The active-site Proton acceptor is Asp72. Position 72 (Asp72) interacts with Mg(2+). Substrate-binding positions include Ser73, 154 to 157, Lys177, and 182 to 183; these read FGYD and HR.

This sequence belongs to the HAM1 NTPase family. As to quaternary structure, homodimer. Mg(2+) serves as cofactor.

It carries out the reaction XTP + H2O = XMP + diphosphate + H(+). The enzyme catalyses dITP + H2O = dIMP + diphosphate + H(+). It catalyses the reaction ITP + H2O = IMP + diphosphate + H(+). In terms of biological role, pyrophosphatase that catalyzes the hydrolysis of nucleoside triphosphates to their monophosphate derivatives, with a high preference for the non-canonical purine nucleotides XTP (xanthosine triphosphate), dITP (deoxyinosine triphosphate) and ITP. Seems to function as a house-cleaning enzyme that removes non-canonical purine nucleotides from the nucleotide pool, thus preventing their incorporation into DNA/RNA and avoiding chromosomal lesions. In Thermus thermophilus (strain ATCC 27634 / DSM 579 / HB8), this protein is dITP/XTP pyrophosphatase.